The sequence spans 674 residues: tRNA wybutosine-synthesizing protein 4 (674 aa).

Residues arginine 84, glycine 109, aspartate 140, 184-185, and glutamate 212 each bind S-adenosyl-L-methionine; that span reads DL.

Belongs to the methyltransferase superfamily. LCMT family.

It carries out the reaction 7-[(3S)-3-amino-3-carboxypropyl]wyosine(37) in tRNA(Phe) + S-adenosyl-L-methionine = 7-[(3S)-(3-amino-3-methoxycarbonyl)propyl]wyosine(37) in tRNA(Phe) + S-adenosyl-L-homocysteine. The enzyme catalyses 7-[(3S)-(3-amino-3-methoxycarbonyl)propyl]wyosine(37) in tRNA(Phe) + S-adenosyl-L-methionine + CO2 = wybutosine(37) in tRNA(Phe) + S-adenosyl-L-homocysteine + 2 H(+). Its pathway is tRNA modification; wybutosine-tRNA(Phe) biosynthesis. Probable S-adenosyl-L-methionine-dependent methyltransferase that acts as a component of the wybutosine biosynthesis pathway. Wybutosine is a hyper modified guanosine with a tricyclic base found at the 3'-position adjacent to the anticodon of eukaryotic phenylalanine tRNA. May methylate the carboxyl group of leucine residues to form alpha-leucine ester residues. The sequence is that of tRNA wybutosine-synthesizing protein 4 (PPM2) from Candida glabrata (strain ATCC 2001 / BCRC 20586 / JCM 3761 / NBRC 0622 / NRRL Y-65 / CBS 138) (Yeast).